Here is a 134-residue protein sequence, read N- to C-terminus: Transcription antitermination protein NusB (134 aa).

Belongs to the NusB family.

Involved in transcription antitermination. Required for transcription of ribosomal RNA (rRNA) genes. Binds specifically to the boxA antiterminator sequence of the ribosomal RNA (rrn) operons. This Shewanella sp. (strain MR-4) protein is Transcription antitermination protein NusB.